The chain runs to 133 residues: Large ribosomal subunit protein bL20 (133 aa).

The protein belongs to the bacterial ribosomal protein bL20 family.

In terms of biological role, binds directly to 23S ribosomal RNA and is necessary for the in vitro assembly process of the 50S ribosomal subunit. It is not involved in the protein synthesizing functions of that subunit. In Bartonella quintana (strain Toulouse) (Rochalimaea quintana), this protein is Large ribosomal subunit protein bL20.